Reading from the N-terminus, the 188-residue chain is Photosystem I assembly protein Ycf4 (188 aa).

Helical transmembrane passes span 26–46 and 68–88; these read YFWAIAVSVGGTGFLLAGLSS and LVMGLYGIAAILLASYLWFVI.

This sequence belongs to the Ycf4 family.

It is found in the cellular thylakoid membrane. In terms of biological role, seems to be required for the assembly of the photosystem I complex. In Synechococcus sp. (strain ATCC 27144 / PCC 6301 / SAUG 1402/1) (Anacystis nidulans), this protein is Photosystem I assembly protein Ycf4.